Consider the following 703-residue polypeptide: UvrABC system protein B (703 aa).

One can recognise a Helicase ATP-binding domain in the interval 33–419 (ERIENGENDV…SDGVVEQIIR (387 aa)). 46–53 (GATGTGKT) contacts ATP. Residues 99 to 122 (YYDYYQPEAYIPQTDTYIEKDSNI) carry the Beta-hairpin motif. The 154-residue stretch at 436–589 (QIDDLLAEIK…QIAYNQEHGI (154 aa)) folds into the Helicase C-terminal domain. The 36-residue stretch at 659 to 694 (ADLIRQLSEQMHTAAEQLQFELAARLRDEIRDLKKE) folds into the UVR domain.

Belongs to the UvrB family. In terms of assembly, forms a heterotetramer with UvrA during the search for lesions. Interacts with UvrC in an incision complex.

Its subcellular location is the cytoplasm. Its function is as follows. The UvrABC repair system catalyzes the recognition and processing of DNA lesions. A damage recognition complex composed of 2 UvrA and 2 UvrB subunits scans DNA for abnormalities. Upon binding of the UvrA(2)B(2) complex to a putative damaged site, the DNA wraps around one UvrB monomer. DNA wrap is dependent on ATP binding by UvrB and probably causes local melting of the DNA helix, facilitating insertion of UvrB beta-hairpin between the DNA strands. Then UvrB probes one DNA strand for the presence of a lesion. If a lesion is found the UvrA subunits dissociate and the UvrB-DNA preincision complex is formed. This complex is subsequently bound by UvrC and the second UvrB is released. If no lesion is found, the DNA wraps around the other UvrB subunit that will check the other stand for damage. This Bifidobacterium longum (strain NCC 2705) protein is UvrABC system protein B.